Reading from the N-terminus, the 263-residue chain is Pyruvate formate-lyase-activating enzyme (263 aa).

The Radical SAM core domain maps to 23–260; the sequence is VDGPGIRFVV…TETYEEYKKR (238 aa). The [4Fe-4S] cluster site is built by Cys37, Cys41, and Cys44. Residues 43 to 45, Gly87, 142 to 144, and His215 each bind S-adenosyl-L-methionine; these read YCH and DIK.

It belongs to the organic radical-activating enzymes family. Requires [4Fe-4S] cluster as cofactor.

The protein resides in the cytoplasm. It catalyses the reaction glycyl-[formate C-acetyltransferase] + reduced [flavodoxin] + S-adenosyl-L-methionine = glycin-2-yl radical-[formate C-acetyltransferase] + semiquinone [flavodoxin] + 5'-deoxyadenosine + L-methionine + H(+). Functionally, activation of pyruvate formate-lyase under anaerobic conditions by generation of an organic free radical, using S-adenosylmethionine and reduced flavodoxin as cosubstrates to produce 5'-deoxy-adenosine. This chain is Pyruvate formate-lyase-activating enzyme (act), found in Streptococcus mutans serotype c (strain ATCC 700610 / UA159).